We begin with the raw amino-acid sequence, 403 residues long: Ribosomal RNA large subunit methyltransferase I (403 aa).

In terms of domain architecture, PUA spans 9–88 (YPRLVLSKGR…ESIDIAFFTR (80 aa)).

The protein belongs to the methyltransferase superfamily. RlmI family.

The protein resides in the cytoplasm. The catalysed reaction is cytidine(1962) in 23S rRNA + S-adenosyl-L-methionine = 5-methylcytidine(1962) in 23S rRNA + S-adenosyl-L-homocysteine + H(+). Its function is as follows. Specifically methylates the cytosine at position 1962 (m5C1962) of 23S rRNA. This Salmonella enteritidis PT4 (strain P125109) protein is Ribosomal RNA large subunit methyltransferase I.